We begin with the raw amino-acid sequence, 330 residues long: Malate dehydrogenase (330 aa).

15-21 (GAGGQIG) provides a ligand contact to NAD(+). The substrate site is built by R95 and R101. NAD(+) contacts are provided by residues N108, Q115, and 132 to 134 (VGN). N134 and R165 together coordinate substrate. H190 (proton acceptor) is an active-site residue.

This sequence belongs to the LDH/MDH superfamily. MDH type 2 family.

It carries out the reaction (S)-malate + NAD(+) = oxaloacetate + NADH + H(+). Its function is as follows. Catalyzes the reversible oxidation of malate to oxaloacetate. The sequence is that of Malate dehydrogenase from Corynebacterium jeikeium (strain K411).